A 565-amino-acid chain; its full sequence is Sulfite reductase [NADPH] hemoprotein beta-component (565 aa).

[4Fe-4S] cluster contacts are provided by Cys-429, Cys-435, Cys-474, and Cys-478. Residue Cys-478 participates in siroheme binding.

It belongs to the nitrite and sulfite reductase 4Fe-4S domain family. Alpha(8)-beta(8). The alpha component is a flavoprotein, the beta component is a hemoprotein. It depends on siroheme as a cofactor. The cofactor is [4Fe-4S] cluster.

It catalyses the reaction hydrogen sulfide + 3 NADP(+) + 3 H2O = sulfite + 3 NADPH + 4 H(+). The protein operates within sulfur metabolism; hydrogen sulfide biosynthesis; hydrogen sulfide from sulfite (NADPH route): step 1/1. Functionally, component of the sulfite reductase complex that catalyzes the 6-electron reduction of sulfite to sulfide. This is one of several activities required for the biosynthesis of L-cysteine from sulfate. The protein is Sulfite reductase [NADPH] hemoprotein beta-component of Shewanella baltica (strain OS155 / ATCC BAA-1091).